The primary structure comprises 440 residues: MPTPSTFVDQTKIEVQAGKGGDGMVAFRHEKFMPNGGPAGGDGGRGGSIIFVADNGLRTLMDFRYRRKFKAEPGENGRIKAQYGKAAKDLYLKVPVGTTVYDFFTGEEIGDLVENGQELVVAKGGRGGRGNIHFATSVNTAPEIAENGEPGEFRTLRLELKVLADVGLVGFPSVGKSTLLSVVTSAKPKIAAYQFTTLKPNLGMVLLPDGRDFSMADLPGLIKGASQGVGLGIQFLRHVERTKVILHMVSMDPNNGRDAYEDYETILHELASYTEDDLSSKREIIVASQMDIPGADEKLAQFKKDLAAHGVDQEVYELSSVTHQGVDRLMSRAADLVSEVEAQEAEAAVKPKEEVKTKTYKYHRPEKMEFTVEKLADHEFEIHGEQLERLVAMTNLDHQDGIMRLARRLKRMGVDDELRAQGAVDGDDVYIGDFSFEFVQ.

Positions 5-163 (STFVDQTKIE…RTLRLELKVL (159 aa)) constitute an Obg domain. Residues 164 to 338 (ADVGLVGFPS…LMSRAADLVS (175 aa)) form the OBG-type G domain. GTP-binding positions include 170–177 (GFPSVGKS), 195–199 (FTTLK), 217–220 (DLPG), 288–291 (SQMD), and 319–321 (SSV). Mg(2+)-binding residues include Ser-177 and Thr-197. The OCT domain occupies 362-440 (YHRPEKMEFT…IGDFSFEFVQ (79 aa)).

The protein belongs to the TRAFAC class OBG-HflX-like GTPase superfamily. OBG GTPase family. Monomer. Requires Mg(2+) as cofactor.

The protein resides in the cytoplasm. An essential GTPase which binds GTP, GDP and possibly (p)ppGpp with moderate affinity, with high nucleotide exchange rates and a fairly low GTP hydrolysis rate. Plays a role in control of the cell cycle, stress response, ribosome biogenesis and in those bacteria that undergo differentiation, in morphogenesis control. The sequence is that of GTPase Obg from Lactobacillus delbrueckii subsp. bulgaricus (strain ATCC 11842 / DSM 20081 / BCRC 10696 / JCM 1002 / NBRC 13953 / NCIMB 11778 / NCTC 12712 / WDCM 00102 / Lb 14).